Here is a 163-residue protein sequence, read N- to C-terminus: Ribosome maturation factor RimM (163 aa).

In terms of domain architecture, PRC barrel spans 94–162; sequence ADEYYYIDLI…DHLVIAADFI (69 aa).

Belongs to the RimM family. In terms of assembly, binds ribosomal protein uS19.

The protein resides in the cytoplasm. Its function is as follows. An accessory protein needed during the final step in the assembly of 30S ribosomal subunit, possibly for assembly of the head region. Essential for efficient processing of 16S rRNA. May be needed both before and after RbfA during the maturation of 16S rRNA. It has affinity for free ribosomal 30S subunits but not for 70S ribosomes. This is Ribosome maturation factor RimM from Zymomonas mobilis subsp. mobilis (strain ATCC 31821 / ZM4 / CP4).